The chain runs to 323 residues: Phosphopantothenate--cysteine ligase 2 (323 aa).

This sequence belongs to the PPC synthetase family. Homodimer.

The enzyme catalyses (R)-4'-phosphopantothenate + L-cysteine + CTP = N-[(R)-4-phosphopantothenoyl]-L-cysteine + CMP + diphosphate + H(+). The protein operates within cofactor biosynthesis; coenzyme A biosynthesis; CoA from (R)-pantothenate: step 2/5. Catalyzes the first step in the biosynthesis of coenzyme A from vitamin B5, where cysteine is conjugated to 4'-phosphopantothenate to form 4-phosphopantothenoylcysteine. This is Phosphopantothenate--cysteine ligase 2 from Oryza sativa subsp. japonica (Rice).